The sequence spans 289 residues: Putative 2-aminoethylphosphonate transport system permease protein PhnU (289 aa).

The next 6 helical transmembrane spans lie at 19–39, 76–96, 111–131, 150–170, 202–222, and 254–274; these read WLLL…SLIV, FFAT…LVFI, FIAL…GSAG, FLYS…PLVM, VIFP…LLLT, and YTVA…LFSL. The region spanning 68 to 275 is the ABC transmembrane type-1 domain; the sequence is LLNTLQIAFF…VLSLGLFSLY (208 aa).

The protein belongs to the binding-protein-dependent transport system permease family.

Its subcellular location is the cell inner membrane. In terms of biological role, probably part of the PhnSTUV complex (TC 3.A.1.11.5) involved in 2-aminoethylphosphonate import. Probably responsible for the translocation of the substrate across the membrane. The sequence is that of Putative 2-aminoethylphosphonate transport system permease protein PhnU (phnU) from Salmonella paratyphi A (strain ATCC 9150 / SARB42).